The primary structure comprises 328 residues: D-cysteine desulfhydrase (328 aa).

At Lys51 the chain carries N6-(pyridoxal phosphate)lysine.

Belongs to the ACC deaminase/D-cysteine desulfhydrase family. In terms of assembly, homodimer. Pyridoxal 5'-phosphate is required as a cofactor.

The enzyme catalyses D-cysteine + H2O = hydrogen sulfide + pyruvate + NH4(+) + H(+). Its function is as follows. Catalyzes the alpha,beta-elimination reaction of D-cysteine and of several D-cysteine derivatives. It could be a defense mechanism against D-cysteine. In Salmonella paratyphi A (strain AKU_12601), this protein is D-cysteine desulfhydrase.